A 229-amino-acid polypeptide reads, in one-letter code: MSNSLDRLERKLGYTFKDRDLMVLALTHRSYAGRNNERLEFLGDAILNFVIGEALFHHFPQAREGQLSRLRARLVKGETLALLARGFEVGDYLRLGSGELKSGGFRRESILADAMEALIGAIYLDTGMDSARERIIAWLGPQLRELTPVDTNKDPKTRLQEFLQSRGCDLPRYEVVDIQGEPHCRTFFVDCEVALLSDKTHGHGGSRRIAEQVAAAAALVALGVENGHD.

In terms of domain architecture, RNase III spans 5–127 (LDRLERKLGY…LIGAIYLDTG (123 aa)). Residue Glu40 coordinates Mg(2+). Residue Asp44 is part of the active site. The Mg(2+) site is built by Asp113 and Glu116. The active site involves Glu116. The DRBM domain maps to 154 to 224 (DPKTRLQEFL…AAAALVALGV (71 aa)).

It belongs to the ribonuclease III family. Homodimer. It depends on Mg(2+) as a cofactor.

It is found in the cytoplasm. It carries out the reaction Endonucleolytic cleavage to 5'-phosphomonoester.. In terms of biological role, digests double-stranded RNA. Involved in the processing of primary rRNA transcript to yield the immediate precursors to the large and small rRNAs (23S and 16S). Processes some mRNAs, and tRNAs when they are encoded in the rRNA operon. Processes pre-crRNA and tracrRNA of type II CRISPR loci if present in the organism. This chain is Ribonuclease 3, found in Pseudomonas aeruginosa (strain LESB58).